A 143-amino-acid chain; its full sequence is Large ribosomal subunit protein uL13 (143 aa).

The protein belongs to the universal ribosomal protein uL13 family. Part of the 50S ribosomal subunit.

Functionally, this protein is one of the early assembly proteins of the 50S ribosomal subunit, although it is not seen to bind rRNA by itself. It is important during the early stages of 50S assembly. This is Large ribosomal subunit protein uL13 from Prochlorococcus marinus (strain MIT 9301).